The sequence spans 858 residues: Protein VACUOLELESS1 (858 aa).

It belongs to the VPS16 family. Core component of at least two putative endosomal tethering complexes, the homotypic fusion and vacuole protein sorting (HOPS) complex and the class C core vacuole/endosome tethering (CORVET) complex. Their common core is composed of the class C Vps proteins VPS11, VCL1, VPS18 and VPS33, which in HOPS further associates with VPS39 and VPS41 and in CORVET with VPS3. Expressed in roots, leaves, stems, siliques, flowers and mature pollen.

Its subcellular location is the vacuole membrane. The protein resides in the prevacuolar compartment membrane. In terms of biological role, required for vacuole biogenesis and vacuole enlargment in dividing and expanding cells. Involved in the docking or fusion of prevacuolar vesicles. Important for the function of both male and female gametophytes, but is not essential for the germination and development of pollen. This Arabidopsis thaliana (Mouse-ear cress) protein is Protein VACUOLELESS1 (VCL1).